Here is a 565-residue protein sequence, read N- to C-terminus: Acyl-CoA ligase easD (565 aa).

Residues 213–221 (TSGTSGKQK), 354–359 (HAYGLT), aspartate 438, arginine 457, and lysine 555 contribute to the ATP site. The segment at 284 to 354 (DMQLMLKTIE…KLRPTWKINH (71 aa)) is SBD1. The interval 355–417 (AYGLTETGVV…FNSPSCFLGY (63 aa)) is SBD2.

This sequence belongs to the ATP-dependent AMP-binding enzyme family.

It participates in antibiotic biosynthesis. Its function is as follows. Acyl-CoA ligase; part of the gene cluster that mediates the biosynthesis of emericellamides, secondary metabolites acting as antibiotics. The biosynthesis of emericellamides initiates from the highly reducing polyketide synthase easB which catalyzes the formation of the linear polyketide chain. EasB produces several polyketides that can be further processed by the downstream enzymes. The polyketides are released from easB as linear polyketide carboxylic acids, which are converted to CoA thioesters by the acyl-CoA ligase easD. The substrates are then loaded onto the acyltransferase easC, which shuttles them to the first thiolation (T) domain of the nonribosomal peptide synthetase easA. EasA then performs condensation of the polyketides with one glycine, two alanine, one valine and one leucine residues. A last step of cyclization leads to the production of emericellamides. The sequence is that of Acyl-CoA ligase easD from Emericella nidulans (strain FGSC A4 / ATCC 38163 / CBS 112.46 / NRRL 194 / M139) (Aspergillus nidulans).